The sequence spans 207 residues: MLDLSIIAYLLIAICLIALIFGALLGYFSVKLKVEADPIVDQIDAILPQSQCGQCGYPGCKPYAEAIANGDQITKCVPGGQPLVVKIAELMGVDVPSMDNTAVPEVKVALIHEDMCIGCTKCIQACPVDAIIGTNKAMHTVVADLCTGCELCVAPCPTNCIEMIKVKQNPRSWNWQFNPDLIIPIVNTTELQKKMIVGSAKGEIQND.

A hydrophobic region spans residues 1-29 (MLDLSIIAYLLIAICLIALIFGALLGYFS). The region spanning 35–93 (EADPIVDQIDAILPQSQCGQCGYPGCKPYAEAIANGDQITKCVPGGQPLVVKIAELMGV) is the 4Fe-4S domain. [4Fe-4S] cluster-binding residues include cysteine 52, cysteine 55, cysteine 60, cysteine 76, cysteine 116, cysteine 119, cysteine 122, cysteine 126, cysteine 146, cysteine 149, cysteine 152, and cysteine 156. 4Fe-4S ferredoxin-type domains lie at 107-136 (KVAL…GTNK) and 137-166 (AMHT…MIKV).

It belongs to the 4Fe4S bacterial-type ferredoxin family. RnfB subfamily. In terms of assembly, the complex is composed of six subunits: RnfA, RnfB, RnfC, RnfD, RnfE and RnfG. [4Fe-4S] cluster serves as cofactor.

It localises to the cell inner membrane. In terms of biological role, part of a membrane-bound complex that couples electron transfer with translocation of ions across the membrane. This Haemophilus ducreyi (strain 35000HP / ATCC 700724) protein is Ion-translocating oxidoreductase complex subunit B.